Consider the following 828-residue polypeptide: ADP-ribosylation factor GTPase-activating protein AGD1 (828 aa).

The 225-residue stretch at 1–225 (MHFAKLDDSP…INQVLAYAHQ (225 aa)) folds into the BAR domain. Residues 225–255 (QSRECANYEMASLNERMQEYQRQVDRETRNS) adopt a coiled-coil conformation. The disordered stretch occupies residues 247–268 (QVDRETRNSCVSPTGDGMRHNS). The PH domain occupies 288-425 (QTIRQGYLSK…WIEKITGVIA (138 aa)). Serine 441 carries the phosphoserine modification. Residues 498–643 (EKPIDVLTRV…IFVRKAIDSQ (146 aa)) form the Arf-GAP domain. A C4-type zinc finger spans residues 513 to 536 (CADCGAPEPDWASLNLGVLICIEC). A compositionally biased stretch (low complexity) spans 590–600 (TSSASRSSGTP). Residues 590-611 (TSSASRSSGTPKSDRPRKLLVR) are disordered. ANK repeat units lie at residues 735–764 (NDCSLLHLACLSADIGMVELLLQYGAKINA) and 768–797 (KGRTPLHHCIISRRYAIARLLLMRGGDPNA).

As to expression, expressed in roots, but not in hypocotyls or cotyledons. Low levels detected in leaf and shoot apical meristems and in siliques.

It is found in the endosome. Probable GTPase-activating protein. Regulator of membrane trafficking. Required for maintaining a straight growth of root hairs. The polypeptide is ADP-ribosylation factor GTPase-activating protein AGD1 (AGD1) (Arabidopsis thaliana (Mouse-ear cress)).